Consider the following 180-residue polypeptide: Large ribosomal subunit protein uL6 (180 aa).

The protein belongs to the universal ribosomal protein uL6 family. As to quaternary structure, part of the 50S ribosomal subunit.

Functionally, this protein binds to the 23S rRNA, and is important in its secondary structure. It is located near the subunit interface in the base of the L7/L12 stalk, and near the tRNA binding site of the peptidyltransferase center. The protein is Large ribosomal subunit protein uL6 of Borrelia hermsii (strain HS1 / DAH).